A 453-amino-acid polypeptide reads, in one-letter code: Chromosomal replication initiator protein DnaA (453 aa).

Residues methionine 1–leucine 75 form a domain I, interacts with DnaA modulators region. The tract at residues leucine 75–threonine 114 is domain II. The span at lysine 87–serine 103 shows a compositional bias: basic and acidic residues. A disordered region spans residues lysine 87–histidine 112. Positions tryptophan 115–serine 331 are domain III, AAA+ region. Glycine 159, glycine 161, lysine 162, and threonine 163 together coordinate ATP. The domain IV, binds dsDNA stretch occupies residues serine 332 to aspartate 453.

Belongs to the DnaA family. Oligomerizes as a right-handed, spiral filament on DNA at oriC.

The protein localises to the cytoplasm. Functionally, plays an essential role in the initiation and regulation of chromosomal replication. ATP-DnaA binds to the origin of replication (oriC) to initiate formation of the DNA replication initiation complex once per cell cycle. Binds the DnaA box (a 9 base pair repeat at the origin) and separates the double-stranded (ds)DNA. Forms a right-handed helical filament on oriC DNA; dsDNA binds to the exterior of the filament while single-stranded (ss)DNA is stabiized in the filament's interior. The ATP-DnaA-oriC complex binds and stabilizes one strand of the AT-rich DNA unwinding element (DUE), permitting loading of DNA polymerase. After initiation quickly degrades to an ADP-DnaA complex that is not apt for DNA replication. Binds acidic phospholipids. This chain is Chromosomal replication initiator protein DnaA, found in Natranaerobius thermophilus (strain ATCC BAA-1301 / DSM 18059 / JW/NM-WN-LF).